The chain runs to 621 residues: DEAD-box ATP-dependent RNA helicase 39 (621 aa).

Residues 112 to 140 (ENFQELGLSEEVMGALQELNIEVPTEIQC) carry the Q motif motif. The Helicase ATP-binding domain occupies 143-330 (IPAVMERKSV…DEEFQGIEHL (188 aa)). 156–163 (SHTGSGKT) serves as a coordination point for ATP. Positions 270 to 273 (DEAD) match the DEAD box motif. The 151-residue stretch at 355 to 505 (KLEALLQVLE…LESLTTDNVR (151 aa)) folds into the Helicase C-terminal domain. A disordered region spans residues 497 to 621 (ESLTTDNVRR…RGKSSSARAS (125 aa)). Basic and acidic residues predominate over residues 503-537 (NVRRDAARTHITQEKGRSVKQIREVSKQRNSRDKP). A compositionally biased stretch (low complexity) spans 555–572 (KSSSSSFSKPRKASSPPE).

Belongs to the DEAD box helicase family.

It carries out the reaction ATP + H2O = ADP + phosphate + H(+). This Arabidopsis thaliana (Mouse-ear cress) protein is DEAD-box ATP-dependent RNA helicase 39 (RH39).